The primary structure comprises 199 residues: Recombination protein RecR (199 aa).

Residues 57-72 (CQSCRTFTEETYCPIC) form a C4-type zinc finger. Residues 81 to 176 (DIICVVETPA…MVSRIAHGVP (96 aa)) form the Toprim domain.

Belongs to the RecR family.

Functionally, may play a role in DNA repair. It seems to be involved in an RecBC-independent recombinational process of DNA repair. It may act with RecF and RecO. The protein is Recombination protein RecR of Shewanella halifaxensis (strain HAW-EB4).